The primary structure comprises 81 residues: Small ribosomal subunit protein bS18 (81 aa).

The protein belongs to the bacterial ribosomal protein bS18 family. As to quaternary structure, part of the 30S ribosomal subunit. Forms a tight heterodimer with protein bS6.

Functionally, binds as a heterodimer with protein bS6 to the central domain of the 16S rRNA, where it helps stabilize the platform of the 30S subunit. In Chlamydia trachomatis serovar L2 (strain ATCC VR-902B / DSM 19102 / 434/Bu), this protein is Small ribosomal subunit protein bS18.